The chain runs to 346 residues: Endosome-associated-trafficking regulator 1 (346 aa).

Polar residues predominate over residues 46–67 (FVSSNSKRAFSKDSNQSTTQFR). Disordered stretches follow at residues 46 to 77 (FVSSNSKRAFSKDSNQSTTQFRGPSECPDGNL), 93 to 129 (LQEDEDDDWSGSYHPSVIENTHGPKVPSPAGTDGDES), and 153 to 173 (SPPAGLHGKTQHRPDSTSDSE). Residues 170-317 (SDSEEGLRLL…SGAQSSIKQL (148 aa)) adopt a coiled-coil conformation.

This sequence belongs to the ENTR1 family.

It is found in the cytoplasm. The protein resides in the early endosome. The protein localises to the endosome. Its subcellular location is the recycling endosome. It localises to the midbody. It is found in the cytoskeleton. The protein resides in the microtubule organizing center. The protein localises to the centrosome. Its subcellular location is the cilium basal body. Endosome-associated protein that plays a role in membrane receptor sorting, cytokinesis and ciliogenesis. This Xenopus tropicalis (Western clawed frog) protein is Endosome-associated-trafficking regulator 1.